We begin with the raw amino-acid sequence, 21 residues long: Japonicin-2 (21 aa).

A disulfide bond links C14 and C21.

As to expression, expressed by the skin glands.

The protein resides in the secreted. Antibacterial activity against the Gram-negative bacterium E.coli and the Gram-positive bacterium S.aureus. This Rana japonica (Japanese reddish frog) protein is Japonicin-2.